The sequence spans 150 residues: Arginine repressor (150 aa).

It belongs to the ArgR family.

The protein localises to the cytoplasm. It functions in the pathway amino-acid biosynthesis; L-arginine biosynthesis [regulation]. Functionally, regulates arginine biosynthesis genes. The chain is Arginine repressor from Halothermothrix orenii (strain H 168 / OCM 544 / DSM 9562).